We begin with the raw amino-acid sequence, 802 residues long: Osmosensitive cation channel TMEM63C (802 aa).

At 1 to 35 (MTASPESMGQKFRNMTANECFQSRSTVLQGQPFGG) the chain is on the extracellular side. A helical transmembrane segment spans residues 36-60 (IPTVLLLNIILWVCVVLVYSFLRKA). At 61-124 (AWDYGRLALL…RDRDLINKCG (64 aa)) the chain is on the cytoplasmic side. Phosphoserine occurs at positions 75 and 78. A helical transmembrane segment spans residues 125–157 (EDARIYIMFQYHLIIFVLILCIPSLGIILPVNY). Over 158–180 (IGSALDWSSHFGRTTIVNVSTES) the chain is Extracellular. Residues 181-205 (QFLWLHSIFAFMYFLTNFAFMGHHC) traverse the membrane as a helical segment. Residues 206 to 401 (LGFVPKKNLH…IIWKHLSIRR (196 aa)) are Cytoplasmic-facing. Residues 402 to 431 (FSWWARFIAINTSLFFLFFFLTTPAIIINT) form a helical membrane-spanning segment. Residues 432–446 (IDMYNVTRPIEKLQS) are Extracellular-facing. Residues 447–476 (PVVTQFFPSVLLWAFTVIMPLLVYFSAFLE) form a helical membrane-spanning segment. The Cytoplasmic segment spans residues 477–480 (AHWT). Residues 481–517 (RSNQNLIIMYKCYIFLVFMVVILPSMGLTSLDVFLRW) traverse the membrane as a helical segment. Topologically, residues 518 to 540 (LFDIYYLEHATIRFQCVFLPDNG) are extracellular. Residues 541–573 (AFFINYVITSALFGTGMELMRLGSLCTYCTRLF) form a helical membrane-spanning segment. At 574-593 (LSRSEPERVHIRKNLAMDFQ) the chain is on the cytoplasmic side. A helical transmembrane segment spans residues 594–612 (FGREYAWMLNVFSVVMAYS). Residues 613–615 (ITC) are Extracellular-facing. Residues 616-640 (PIIVPFGLLYLCMKHITDRYNMYYS) form a helical membrane-spanning segment. The Cytoplasmic segment spans residues 641-647 (YAPTKLN). A helical membrane pass occupies residues 648 to 676 (AQIHMAAVYQAIFAPLLGLFWMLFFSILR). Residues 677–681 (VGSLH) lie on the Extracellular side of the membrane. The helical transmembrane segment at 682-702 (SITLFSLSSIIISVIIAFSGV) threads the bilayer. The Cytoplasmic portion of the chain corresponds to 703–802 (FLGKFRIAQQ…EGLELEGQSH (100 aa)). The tract at residues 753 to 785 (TPASSPARHTYGTMNSQPEEGEEESGLRGFARE) is disordered.

The protein belongs to the CSC1 (TC 1.A.17) family. In terms of assembly, monomer. Expressed in podocytes of kidney glomeruli.

The protein resides in the endoplasmic reticulum membrane. It is found in the cell membrane. It carries out the reaction Ca(2+)(in) = Ca(2+)(out). Functionally, acts as an osmosensitive cation channel preferentially activated upon hypotonic stress. In contrast to TMEM63B, does not show phospholipid scramblase activity. Enriched in mitochondria-ER contact sites where it may regulate the metabolite flux and organelles' morphologies in response to osmotic changes. In particular may regulate mitochondrial motility and function in motor neuron axons. Required for the functional integrity of the kidney glomerular filtration barrier. This chain is Osmosensitive cation channel TMEM63C (Tmem63c), found in Rattus norvegicus (Rat).